A 903-amino-acid chain; its full sequence is KAT8 regulatory NSL complex subunit 1-like protein (903 aa).

Disordered regions lie at residues 319–343 (DSDA…DECN), 419–441 (MPKS…PSSP), and 652–676 (TECT…HRSE). Polar residues-rich tracts occupy residues 423-441 (PQGT…PSSP) and 652-661 (TECTSSYSPD). The 115-residue stretch at 748 to 862 (EIITPSWKEV…ESPKGKTIHW (115 aa)) folds into the PEHE domain.

The chain is KAT8 regulatory NSL complex subunit 1-like protein (kansl1l) from Xenopus tropicalis (Western clawed frog).